The primary structure comprises 196 residues: Carnitine operon protein CaiE (196 aa).

Residues 173 to 196 are disordered; that stretch reads TQPLRQMEENRPRLQGTTDVTPKR. The span at 187–196 shows a compositional bias: polar residues; that stretch reads QGTTDVTPKR.

The protein belongs to the transferase hexapeptide repeat family.

The protein operates within amine and polyamine metabolism; carnitine metabolism. Functionally, overproduction of CaiE stimulates the activity of CaiB and CaiD. This Shigella dysenteriae serotype 1 (strain Sd197) protein is Carnitine operon protein CaiE.